Here is a 233-residue protein sequence, read N- to C-terminus: Orotidine 5'-phosphate decarboxylase (233 aa).

Residues aspartate 13, lysine 35, 62–71 (DLKFHDIPNT), threonine 122, arginine 182, glutamine 191, glycine 211, and arginine 212 contribute to the substrate site. The active-site Proton donor is lysine 64.

This sequence belongs to the OMP decarboxylase family. Type 1 subfamily. In terms of assembly, homodimer.

It carries out the reaction orotidine 5'-phosphate + H(+) = UMP + CO2. The protein operates within pyrimidine metabolism; UMP biosynthesis via de novo pathway; UMP from orotate: step 2/2. Its function is as follows. Catalyzes the decarboxylation of orotidine 5'-monophosphate (OMP) to uridine 5'-monophosphate (UMP). The polypeptide is Orotidine 5'-phosphate decarboxylase (Pseudomonas entomophila (strain L48)).